A 408-amino-acid polypeptide reads, in one-letter code: Subtilisin-like protease 6 (408 aa).

Residues 1 to 20 (MGFITKAIPIVLAALSTVDG) form the signal peptide. Positions 21-123 (AKILEAGPHA…RDTVVKATAI (103 aa)) are excised as a propeptide. The region spanning 36 to 119 (KYIVVMKQDV…DFIERDTVVK (84 aa)) is the Inhibitor I9 domain. The region spanning 131-408 (SWGLARVGSK…GKLIYNGSGK (278 aa)) is the Peptidase S8 domain. Active-site charge relay system residues include Asp-163 and His-194. N-linked (GlcNAc...) asparagine glycosylation is found at Asn-248, Asn-260, and Asn-345. Ser-354 serves as the catalytic Charge relay system. N-linked (GlcNAc...) asparagine glycosylation occurs at Asn-404.

It belongs to the peptidase S8 family.

The protein resides in the secreted. Secreted subtilisin-like serine protease with keratinolytic activity that contributes to pathogenicity. This chain is Subtilisin-like protease 6 (SUB6), found in Arthroderma gypseum (strain ATCC MYA-4604 / CBS 118893) (Microsporum gypseum).